Here is a 314-residue protein sequence, read N- to C-terminus: Tetraacyldisaccharide 4'-kinase (314 aa).

61–68 (IVGGSGKT) lines the ATP pocket.

This sequence belongs to the LpxK family.

The catalysed reaction is a lipid A disaccharide + ATP = a lipid IVA + ADP + H(+). It functions in the pathway glycolipid biosynthesis; lipid IV(A) biosynthesis; lipid IV(A) from (3R)-3-hydroxytetradecanoyl-[acyl-carrier-protein] and UDP-N-acetyl-alpha-D-glucosamine: step 6/6. Functionally, transfers the gamma-phosphate of ATP to the 4'-position of a tetraacyldisaccharide 1-phosphate intermediate (termed DS-1-P) to form tetraacyldisaccharide 1,4'-bis-phosphate (lipid IVA). The chain is Tetraacyldisaccharide 4'-kinase from Aliarcobacter butzleri (strain RM4018) (Arcobacter butzleri).